Consider the following 299-residue polypeptide: MLIDYLFRLPLNILFLFSHSFSSFLLPFQLHFMQRAFVIGLIAALLAGIVGSFLMLQRLTLLSDAISHSVLPGLAIAFSFGIPLIFGALLASIISVIIINWIRTESRLKEDTAIGIVFASFFGLGILLISVIQKENKVDLNHFLFGNILGITSEDLQNTSIILAIILLFFISCYRQLKCYTFDPIMAQTIGLPINFLQSTFLILVALTIIVSMKAIGVILVLALLVTPGATGLLIGKSLEYVILTSSIIGVSCSFSGMLLSYLFNIPPGPTIVLITSLIFFILFLIINKKDSTTDSKLF.

The next 8 membrane-spanning stretches (helical) occupy residues 13–33, 36–56, 79–99, 112–132, 151–171, 201–221, 241–261, and 267–287; these read ILFL…LHFM, AFVI…FLML, SFGI…VIII, TAIG…ISVI, ITSE…LFFI, FLIL…VILV, YVIL…MLLS, and PPGP…FLII.

Belongs to the ABC-3 integral membrane protein family.

The protein resides in the plastid. The protein localises to the cyanelle membrane. This is an uncharacterized protein from Cyanophora paradoxa.